Here is a 534-residue protein sequence, read N- to C-terminus: 26S proteasome non-ATPase regulatory subunit 3 (534 aa).

Over residues 1 to 16 the composition is skewed to basic and acidic residues; that stretch reads MKQEGSARRRGADKAK. A disordered region spans residues 1-69; it reads MKQEGSARRR…AEHSQRELDT (69 aa). A compositionally biased stretch (pro residues) spans 17–32; that stretch reads PPPGGGEQEPPPPPAP. A Glycyl lysine isopeptide (Lys-Gly) (interchain with G-Cter in SUMO1); alternate cross-link involves residue Lys38. A Glycyl lysine isopeptide (Lys-Gly) (interchain with G-Cter in SUMO2); alternate cross-link involves residue Lys38. The region spanning 286–465 is the PCI domain; it reads ARYLYYTGRI…GYVQSKEMID (180 aa). Phosphoserine is present on residues Ser418 and Ser430. The interval 500-534 is disordered; the sequence is SYNKDLESAEERREREQQDLEFAKEMAEDDDDSFP. The span at 501-525 shows a compositional bias: basic and acidic residues; the sequence is YNKDLESAEERREREQQDLEFAKEM.

This sequence belongs to the proteasome subunit S3 family. In terms of assembly, component of the 19S proteasome regulatory particle complex. The 26S proteasome consists of a 20S core particle (CP) and two 19S regulatory subunits (RP). The regulatory particle is made of a lid composed of 9 subunits including PSMD3, a base containing 6 ATPases and few additional components. Interacts with UBQLN1 (via ubiquitin-like domain). Interacts with ERCC6.

In terms of biological role, component of the 26S proteasome, a multiprotein complex involved in the ATP-dependent degradation of ubiquitinated proteins. This complex plays a key role in the maintenance of protein homeostasis by removing misfolded or damaged proteins, which could impair cellular functions, and by removing proteins whose functions are no longer required. Therefore, the proteasome participates in numerous cellular processes, including cell cycle progression, apoptosis, or DNA damage repair. The protein is 26S proteasome non-ATPase regulatory subunit 3 (PSMD3) of Homo sapiens (Human).